The sequence spans 137 residues: ATP synthase epsilon chain (137 aa).

Belongs to the ATPase epsilon chain family. In terms of assembly, F-type ATPases have 2 components, CF(1) - the catalytic core - and CF(0) - the membrane proton channel. CF(1) has five subunits: alpha(3), beta(3), gamma(1), delta(1), epsilon(1). CF(0) has three main subunits: a, b and c.

The protein resides in the cell inner membrane. Its function is as follows. Produces ATP from ADP in the presence of a proton gradient across the membrane. This is ATP synthase epsilon chain from Pseudoalteromonas atlantica (strain T6c / ATCC BAA-1087).